A 420-amino-acid chain; its full sequence is COP9 signalosome complex subunit 11 (420 aa).

The 170-residue stretch at 177-346 folds into the PCI domain; the sequence is SIHEHPSLVD…VYYKEDLPVG (170 aa). A disordered region spans residues 386–420; sequence VEPLNRSQDMDAFELHEQSEDEEYEEEHLEEGENV. Residues 404–420 are compositionally biased toward acidic residues; that stretch reads SEDEEYEEEHLEEGENV.

In terms of assembly, component of a COP9 signalosome-like (CSN) complex.

It is found in the cytoplasm. The protein localises to the nucleus. Its function is as follows. Component of the COP9 signalosome (CSN) complex that acts as an regulator of the ubiquitin (Ubl) conjugation pathway by mediating the deneddylation of the cullin subunit of SCF-type E3 ubiquitin-protein ligase complexes The CSN complex is involved in the regulation of the mating pheromone response. PCI8 may also be involved in transcriptional and translational control. The polypeptide is COP9 signalosome complex subunit 11 (PCI8) (Eremothecium gossypii (strain ATCC 10895 / CBS 109.51 / FGSC 9923 / NRRL Y-1056) (Yeast)).